The primary structure comprises 152 residues: Protein-export protein SecB (152 aa).

It belongs to the SecB family. As to quaternary structure, homotetramer, a dimer of dimers. One homotetramer interacts with 1 SecA dimer.

It localises to the cytoplasm. Its function is as follows. One of the proteins required for the normal export of preproteins out of the cell cytoplasm. It is a molecular chaperone that binds to a subset of precursor proteins, maintaining them in a translocation-competent state. It also specifically binds to its receptor SecA. The sequence is that of Protein-export protein SecB from Acinetobacter baumannii (strain AB307-0294).